The primary structure comprises 307 residues: Glycine--tRNA ligase alpha subunit (307 aa).

This sequence belongs to the class-II aminoacyl-tRNA synthetase family. As to quaternary structure, tetramer of two alpha and two beta subunits.

It localises to the cytoplasm. The catalysed reaction is tRNA(Gly) + glycine + ATP = glycyl-tRNA(Gly) + AMP + diphosphate. The protein is Glycine--tRNA ligase alpha subunit of Levilactobacillus brevis (strain ATCC 367 / BCRC 12310 / CIP 105137 / JCM 1170 / LMG 11437 / NCIMB 947 / NCTC 947) (Lactobacillus brevis).